A 432-amino-acid polypeptide reads, in one-letter code: Bifunctional IPC transferase and DIPP synthase (432 aa).

The interval 3–225 is mobA-like NTP transferase; that stretch reads PERAVILAAG…RARRMLVRTA (223 aa). CTP-binding positions include 9–11, Lys-22, and Glu-113; that span reads LAA. Residue Glu-113 coordinates Mg(2+). The CDP-alcohol phosphatidyltransferases stretch occupies residues 226–426; that stretch reads VKGTGDGFVS…LTLYFVVKKV (201 aa). 3 consecutive transmembrane segments (helical) span residues 264–284, 337–356, and 385–405; these read FLLG…AGIL, IWYF…SYST, and VFLT…ALFL.

In the N-terminal section; belongs to the MobA family. The protein in the C-terminal section; belongs to the CDP-alcohol phosphatidyltransferase class-I family. It depends on Mg(2+) as a cofactor.

The protein localises to the membrane. It carries out the reaction 1D-myo-inositol 3-phosphate + CTP + H(+) = CDP-1L-myo-inositol + diphosphate. It catalyses the reaction CDP-1L-myo-inositol + 1D-myo-inositol 3-phosphate = bis(1L-myo-inositol) 3,1'-phosphate 1-phosphate + CMP + H(+). Involved in biosynthesis of di-myo-inositol phosphate (DIP), a widespread organic solute in microorganisms adapted to hot environments. Catalyzes the condensation of CTP and L-myo-inositol-1-phosphate into CDP-L-myo-inositol, as well as the biosynthesis of di-myo-inositol-1,3'-phosphate-1'-phosphate (DIPP) from CDP-L-myo-inositol and L-myo-inositol-1-phosphate. The polypeptide is Bifunctional IPC transferase and DIPP synthase (Thermococcus kodakarensis (strain ATCC BAA-918 / JCM 12380 / KOD1) (Pyrococcus kodakaraensis (strain KOD1))).